The sequence spans 536 residues: MKTKFIFVTGGVVSSIGKGLASASLGALLESRGLRVTMQKLDPYINVDPGTMSPFQHGEVFVTDDGAETDLDLGHYERYTSARLSKRSNFTTGQVYFSVIEKERRGDYLGGTVQVIPHITDEIKHKILENAKGADVAIVEVGGTVGDIESLPFLEAIRQFKADRGAGNVLYIHVTLVPHIKTAGELKTKPTQHSVKELREIGIQPDILICRCEMELPRDMKAKIALFCNVEEKAVITSTDAEHIYAVPLALHKEGLDEQVVEKLNIWTKAPDLSPWHSVVEKLRSPLRGEVRIAIVGKYVNLTESYKSLSEALTHGGIANDCRVVLTYLDSERIESEGIGSSFDDIDAILVPGGFGERGTEGKIKAIEYARTQKIPFFGICLGMQMAVVEYARNVCGLEDACSSEFRPDCANPVISLMEEQRDIDRLGGTMRLGAYPCSLTKGTFAQKAYGSLEISERHRHRYEYNNAFRETLVANGLVVSGLYKEGDLVEIVEVADHPWFLGCQFHPEFKSKPLNPHPLFRAFIAAALDRKDKRR.

The tract at residues 1–266 (MKTKFIFVTG…DEQVVEKLNI (266 aa)) is amidoligase domain. Ser14 contributes to the CTP binding site. UTP is bound at residue Ser14. ATP-binding positions include 15 to 20 (SIGKGL) and Asp72. Mg(2+) is bound by residues Asp72 and Glu140. CTP-binding positions include 147-149 (DIE), 187-192 (KTKPTQ), and Lys223. Residues 187–192 (KTKPTQ) and Lys223 each bind UTP. The Glutamine amidotransferase type-1 domain occupies 292 to 534 (RIAIVGKYVN…IAAALDRKDK (243 aa)). Residue Gly354 coordinates L-glutamine. The active-site Nucleophile; for glutamine hydrolysis is Cys381. L-glutamine is bound by residues 382–385 (LGMQ), Glu405, and Arg462. Active-site residues include His507 and Glu509.

The protein belongs to the CTP synthase family. In terms of assembly, homotetramer.

The catalysed reaction is UTP + L-glutamine + ATP + H2O = CTP + L-glutamate + ADP + phosphate + 2 H(+). It carries out the reaction L-glutamine + H2O = L-glutamate + NH4(+). It catalyses the reaction UTP + NH4(+) + ATP = CTP + ADP + phosphate + 2 H(+). The protein operates within pyrimidine metabolism; CTP biosynthesis via de novo pathway; CTP from UDP: step 2/2. Allosterically activated by GTP, when glutamine is the substrate; GTP has no effect on the reaction when ammonia is the substrate. The allosteric effector GTP functions by stabilizing the protein conformation that binds the tetrahedral intermediate(s) formed during glutamine hydrolysis. Inhibited by the product CTP, via allosteric rather than competitive inhibition. Catalyzes the ATP-dependent amination of UTP to CTP with either L-glutamine or ammonia as the source of nitrogen. Regulates intracellular CTP levels through interactions with the four ribonucleotide triphosphates. The polypeptide is CTP synthase (Geobacter sulfurreducens (strain ATCC 51573 / DSM 12127 / PCA)).